The sequence spans 339 residues: Phenylalanine--tRNA ligase alpha subunit (339 aa).

Glutamate 253 is a Mg(2+) binding site.

It belongs to the class-II aminoacyl-tRNA synthetase family. Phe-tRNA synthetase alpha subunit type 1 subfamily. Tetramer of two alpha and two beta subunits. The cofactor is Mg(2+).

The protein localises to the cytoplasm. The enzyme catalyses tRNA(Phe) + L-phenylalanine + ATP = L-phenylalanyl-tRNA(Phe) + AMP + diphosphate + H(+). The protein is Phenylalanine--tRNA ligase alpha subunit of Alcanivorax borkumensis (strain ATCC 700651 / DSM 11573 / NCIMB 13689 / SK2).